A 662-amino-acid polypeptide reads, in one-letter code: Centrosomal protein of 76 kDa (662 aa).

Belongs to the CEP76 family.

The protein resides in the cytoplasm. Its subcellular location is the cytoskeleton. It is found in the microtubule organizing center. The protein localises to the centrosome. It localises to the centriole. Its function is as follows. Centrosomal protein involved in regulation of centriole duplication. Required to limit centriole duplication to once per cell cycle by preventing centriole reduplication. The sequence is that of Centrosomal protein of 76 kDa (cep76) from Danio rerio (Zebrafish).